The primary structure comprises 68 residues: DNA-directed RNA polymerase subunit Rpo10 (68 aa).

Cys7, Cys10, Cys44, and Cys45 together coordinate Zn(2+).

Belongs to the archaeal Rpo10/eukaryotic RPB10 RNA polymerase subunit family. Part of the RNA polymerase complex. Zn(2+) serves as cofactor.

It is found in the cytoplasm. It carries out the reaction RNA(n) + a ribonucleoside 5'-triphosphate = RNA(n+1) + diphosphate. DNA-dependent RNA polymerase (RNAP) catalyzes the transcription of DNA into RNA using the four ribonucleoside triphosphates as substrates. This Methanococcus maripaludis (strain C6 / ATCC BAA-1332) protein is DNA-directed RNA polymerase subunit Rpo10.